A 307-amino-acid chain; its full sequence is Agmatinase (307 aa).

Residues H128, D151, H153, D155, D232, and D234 each contribute to the Mn(2+) site.

The protein belongs to the arginase family. Agmatinase subfamily. The cofactor is Mn(2+).

The enzyme catalyses agmatine + H2O = urea + putrescine. It functions in the pathway amine and polyamine biosynthesis; putrescine biosynthesis via agmatine pathway; putrescine from agmatine: step 1/1. In terms of biological role, catalyzes the formation of putrescine from agmatine. The polypeptide is Agmatinase (Neisseria gonorrhoeae (strain ATCC 700825 / FA 1090)).